The primary structure comprises 144 residues: MMIIIFIELCRIADSLLWIPKSSRRTSSTFYIPNIIALLKMESQQLSQNSPTLHIHTCGSKIGTLFLRFTKVAIGTSLIVGAGVAMEVSVPLPPQPLYSRSEVPSVELCGIVAICRSPPSVYPTCRPISLSKKIVSGLVRTNSS.

Residues 72–90 (VAIGTSLIVGAGVAMEVSV) traverse the membrane as a helical segment.

This sequence to yeast YCL21w.

Its subcellular location is the membrane. This is an uncharacterized protein from Saccharomyces cerevisiae (strain ATCC 204508 / S288c) (Baker's yeast).